The chain runs to 385 residues: Rhomboid domain-containing protein 3 (385 aa).

5 helical membrane-spanning segments follow: residues 13–33 (ALPL…LLGA), 58–78 (LGHT…TLGW), 95–115 (VLAL…VSGA), 146–166 (WLLP…PPFL), and 168–188 (LLCG…WLEL). Residues 238 to 264 (PPYLASSDSWPHSDGSAQLPPRLGPGQ) are disordered. Positions 322–361 (SVSSLRLQQLQHMGFPTEQAAVALAATGRVEGAVSLLVEG) constitute a UBA domain.

Its subcellular location is the membrane. The chain is Rhomboid domain-containing protein 3 (Rhbdd3) from Mus musculus (Mouse).